Here is a 361-residue protein sequence, read N- to C-terminus: Innexin inx1 (361 aa).

The Cytoplasmic portion of the chain corresponds to Met-1 to Asn-28. Residues Leu-29 to Gly-49 traverse the membrane as a helical segment. The Extracellular segment spans residues Asn-50–Tyr-109. A helical membrane pass occupies residues Gln-110 to Trp-130. Residues Asp-131–Trp-181 lie on the Cytoplasmic side of the membrane. A helical membrane pass occupies residues Phe-182–Phe-202. Residues Asp-203–Thr-267 are Extracellular-facing. Residues Tyr-268 to Tyr-288 form a helical membrane-spanning segment. At Arg-289–Pro-361 the chain is on the cytoplasmic side.

It belongs to the pannexin family. In terms of tissue distribution, expressed in embryonic neural precursors including the dorsal median neuroblast, glial cells, neuropilar glial ring, developing myoblasts cells and in a circumferential band of epithelial cells at the trochanter/coxa boundary stripe in the developing limb.

It is found in the cell membrane. It localises to the cell junction. Its subcellular location is the gap junction. Structural components of the gap junctions. This is Innexin inx1 (inx1) from Schistocerca americana (American grasshopper).